The sequence spans 290 residues: 33 kDa chaperonin (290 aa).

2 cysteine pairs are disulfide-bonded: Cys235–Cys237 and Cys268–Cys271.

Belongs to the HSP33 family. In terms of processing, under oxidizing conditions two disulfide bonds are formed involving the reactive cysteines. Under reducing conditions zinc is bound to the reactive cysteines and the protein is inactive.

It is found in the cytoplasm. In terms of biological role, redox regulated molecular chaperone. Protects both thermally unfolding and oxidatively damaged proteins from irreversible aggregation. Plays an important role in the bacterial defense system toward oxidative stress. This chain is 33 kDa chaperonin, found in Streptococcus pyogenes serotype M1.